We begin with the raw amino-acid sequence, 354 residues long: Methylthioribose-1-phosphate isomerase (354 aa).

Residues 58–60, R101, and Q204 each bind substrate; that span reads RGA. Residue D245 is the Proton donor of the active site. Residue 255–256 coordinates substrate; that stretch reads NK.

Belongs to the eIF-2B alpha/beta/delta subunits family. MtnA subfamily.

The enzyme catalyses 5-(methylsulfanyl)-alpha-D-ribose 1-phosphate = 5-(methylsulfanyl)-D-ribulose 1-phosphate. It participates in amino-acid biosynthesis; L-methionine biosynthesis via salvage pathway; L-methionine from S-methyl-5-thio-alpha-D-ribose 1-phosphate: step 1/6. Its function is as follows. Catalyzes the interconversion of methylthioribose-1-phosphate (MTR-1-P) into methylthioribulose-1-phosphate (MTRu-1-P). In Xylella fastidiosa (strain M23), this protein is Methylthioribose-1-phosphate isomerase.